A 372-amino-acid chain; its full sequence is 1,3,6,8-tetrahydroxynaphthalene synthase (372 aa).

Cys138 is an active-site residue.

This sequence belongs to the thiolase-like superfamily. Chalcone/stilbene synthases family. As to quaternary structure, homodimer.

The enzyme catalyses 5 malonyl-CoA + 5 H(+) = naphthalene-1,3,6,8-tetrol + 5 CO2 + 5 CoA + H2O. Its pathway is pigment biosynthesis; melanin biosynthesis. Its function is as follows. Involved in the biosynthesis of melanin but also various secondary metabolites containing a naphthoquinone ring. Catalyzes the iterative condensation of five CoA-linked malonyl units to form a pentaketide intermediate. THNS subsequently catalyzes the dual intramolecular Claisen and aldol condensations of this linear intermediate to produce the fused ring of 1,3,6,8-tetrahydroxynaphthalene (THN). This chain is 1,3,6,8-tetrahydroxynaphthalene synthase, found in Streptomyces griseus.